The chain runs to 67 residues: Large ribosomal subunit protein bL35 (67 aa).

Belongs to the bacterial ribosomal protein bL35 family.

In Leptospira borgpetersenii serovar Hardjo-bovis (strain JB197), this protein is Large ribosomal subunit protein bL35.